The sequence spans 315 residues: Heme oxygenase 2 (315 aa).

Over residues 1-12 the composition is skewed to acidic residues; that stretch reads MSSEVETSEGVD. A disordered region spans residues 1 to 28; it reads MSSEVETSEGVDESEKNSMAPEKENHTK. At Ser2 the chain carries N-acetylserine. Ser2 carries the phosphoserine modification. The Cytoplasmic segment spans residues 2 to 294; that stretch reads SSEVETSEGV…TTVAVLRKPS (293 aa). Residues 13 to 28 are compositionally biased toward basic and acidic residues; the sequence is ESEKNSMAPEKENHTK. Positions 44, 153, 198, and 202 each coordinate heme b. HRM repeat units follow at residues 263–268 and 280–285; these read KCPFYA and NCPFQT. An S-nitrosocysteine mark is found at Cys264 and Cys281. Residues 295 to 315 form a helical; Anchor for type IV membrane protein membrane-spanning segment; sequence LQLILAASVALVAGLLAWYYM.

The protein belongs to the heme oxygenase family. In terms of processing, a soluble form arises by proteolytic removal of the membrane anchor. S-nitrosylated by BLVRB. As to expression, ubiquitous.

Its subcellular location is the microsome membrane. It localises to the endoplasmic reticulum membrane. The enzyme catalyses heme b + 3 reduced [NADPH--hemoprotein reductase] + 3 O2 = biliverdin IXalpha + CO + Fe(2+) + 3 oxidized [NADPH--hemoprotein reductase] + 3 H2O + H(+). Functionally, catalyzes the oxidative cleavage of heme at the alpha-methene bridge carbon, released as carbon monoxide (CO), to generate biliverdin IXalpha, while releasing the central heme iron chelate as ferrous iron. In Mus musculus (Mouse), this protein is Heme oxygenase 2 (Hmox2).